An 819-amino-acid chain; its full sequence is DNA topoisomerase 4 subunit A (819 aa).

The region spanning 30-496 (LPDIRDGLKP…QIIEIDTASL (467 aa)) is the Topo IIA-type catalytic domain. Tyrosine 118 (O-(5'-phospho-DNA)-tyrosine intermediate) is an active-site residue.

It belongs to the type II topoisomerase GyrA/ParC subunit family. ParC type 2 subfamily. As to quaternary structure, heterotetramer composed of ParC and ParE.

It is found in the cell membrane. It catalyses the reaction ATP-dependent breakage, passage and rejoining of double-stranded DNA.. In terms of biological role, topoisomerase IV is essential for chromosome segregation. It relaxes supercoiled DNA. Performs the decatenation events required during the replication of a circular DNA molecule. The sequence is that of DNA topoisomerase 4 subunit A from Streptococcus pyogenes serotype M1.